The sequence spans 103 residues: Histone H4 (103 aa).

A compositionally biased stretch (gly residues) spans 1-14 (MSGRGKGGKGLGKG). A disordered region spans residues 1–20 (MSGRGKGGKGLGKGGAKRHR). Lysine 6 bears the N6-acetyl-N6-methyllysine; alternate mark. 3 positions are modified to N6-methyllysine; alternate: lysine 6, lysine 9, and lysine 13. Lysine 13 carries the N6-acetyl-N6-methyllysine; alternate modification. Residues 17–21 (KRHRK) mediate DNA binding. An N6-glutaryllysine modification is found at lysine 92.

Belongs to the histone H4 family. The nucleosome is a histone octamer containing two molecules each of H2A, H2B, H3 and H4 assembled in one H3-H4 heterotetramer and two H2A-H2B heterodimers. The octamer wraps approximately 147 bp of DNA. Post-translationally, glutarylation at Lys-92 (H4K91glu) destabilizes nucleosomes by promoting dissociation of the H2A-H2B dimers from nucleosomes.

Its subcellular location is the nucleus. It is found in the chromosome. Functionally, core component of nucleosome. Nucleosomes wrap and compact DNA into chromatin, limiting DNA accessibility to the cellular machineries which require DNA as a template. Histones thereby play a central role in transcription regulation, DNA repair, DNA replication and chromosomal stability. DNA accessibility is regulated via a complex set of post-translational modifications of histones, also called histone code, and nucleosome remodeling. The sequence is that of Histone H4 (HHF1) from Mycosarcoma maydis (Corn smut fungus).